The sequence spans 616 residues: MKKQFDTEVNDLLYLIIHSLYSHKEIFLRELISNASDAIDKLKFLSLTNEKFKNIALEPKIEITFDDKSILIKDNGIGMNEQDLTNHLGVIAKSGTKEFINNLKQDEKKSASLIGQFGVGFYSAFIVSEKVEVTSKKALESDAYIWFSDGKTGYEIEKAKKEESGTEIKLYLNKEGLEYANKWKIQEIIKKYSNHINYPIYIKYSEPIMKDGKQEGIEEKEEKLNETTALWTKNKSEIKAEEYNEFYKNTTFDYENPLMHVHTKAEGNLEYTNLFYIPSKAPYDLYYPNTKPGVKLFINRIFITDSEGSLLPNYLRFIKGIIDCQDLPLNVSREILQQNKILSKIKSSSVKKILSELEKLSKKNPEKFSKFSKEFGRCIKEGVYSDFENREKLISLIRFKSSSVDGFVSFKEYKERMKESQKSIYYITGGKENILKENPIVSAYKEKGFEILIMDDELDEAILNLIPEYEGLKLKAINKNETSNELKDENFKKIEEEFKDILTKVKEILKDHIKEVNLSATLIKEPSAIIVDSNDPTYQMQKIMLSMGQEVKEIKPILELNPNNKIVQNLKNLESEKLEKISILLFEEALLTSGMPSKNPGKFINIINEFLEKELL.

The a; substrate-binding stretch occupies residues 1 to 333 (MKKQFDTEVN…CQDLPLNVSR (333 aa)). The interval 334-542 (EILQQNKILS…SNDPTYQMQK (209 aa)) is b. A c region spans residues 543 to 616 (IMLSMGQEVK…INEFLEKELL (74 aa)).

Belongs to the heat shock protein 90 family. Homodimer.

Its subcellular location is the cytoplasm. Molecular chaperone. Has ATPase activity. The polypeptide is Chaperone protein HtpG (Borrelia garinii subsp. bavariensis (strain ATCC BAA-2496 / DSM 23469 / PBi) (Borreliella bavariensis)).